A 371-amino-acid polypeptide reads, in one-letter code: MKKSNKLLDNKKLSFYNSVNNHILVLFGLISITCVFSDFYYKTSNLTIPFIITTLVSSIITFIGIPKLKKIKIKQIIRDEGPKNHFLKQGTPTMGGIFFIPIGIIVSNILYFNQENYNIILTLSFVIIFFMFIGFIDDFLSLKKKLNTGLSSNQKILLQSLISLIFILICASNNLIPQNIQIANKVFNIGNLIYPLGIFVLLAESNSTNLTDGLDGLLSGCSVLIFTGLAISILIENPSNNSTLAPLCIAMAGACMGFLFLNKYPAKLFMGDSGSLAIGASLGGIALISNHLWSLLIMGGILAAESISVIIQVSIFKISKRVKGKGHKLFLMTPLHHHFELKGNNESLIVSSFWLITLFLVIINLIFLIKS.

11 helical membrane passes run 21 to 41, 46 to 66, 92 to 112, 119 to 139, 156 to 176, 182 to 202, 216 to 236, 241 to 261, 268 to 288, 296 to 316, and 349 to 369; these read NHILVLFGLISITCVFSDFYY, LTIPFIITTLVSSIITFIGIP, PTMGGIFFIPIGIIVSNILYF, IILTLSFVIIFFMFIGFIDDF, ILLQSLISLIFILICASNNLI, IANKVFNIGNLIYPLGIFVLL, GLLSGCSVLIFTGLAISILIE, NSTLAPLCIAMAGACMGFLFL, LFMGDSGSLAIGASLGGIALI, LIMGGILAAESISVIIQVSIF, and IVSSFWLITLFLVIINLIFLI.

Belongs to the glycosyltransferase 4 family. MraY subfamily. Mg(2+) is required as a cofactor.

The protein resides in the cell inner membrane. It carries out the reaction UDP-N-acetyl-alpha-D-muramoyl-L-alanyl-gamma-D-glutamyl-meso-2,6-diaminopimeloyl-D-alanyl-D-alanine + di-trans,octa-cis-undecaprenyl phosphate = di-trans,octa-cis-undecaprenyl diphospho-N-acetyl-alpha-D-muramoyl-L-alanyl-D-glutamyl-meso-2,6-diaminopimeloyl-D-alanyl-D-alanine + UMP. Its pathway is cell wall biogenesis; peptidoglycan biosynthesis. In terms of biological role, catalyzes the initial step of the lipid cycle reactions in the biosynthesis of the cell wall peptidoglycan: transfers peptidoglycan precursor phospho-MurNAc-pentapeptide from UDP-MurNAc-pentapeptide onto the lipid carrier undecaprenyl phosphate, yielding undecaprenyl-pyrophosphoryl-MurNAc-pentapeptide, known as lipid I. The sequence is that of Phospho-N-acetylmuramoyl-pentapeptide-transferase from Prochlorococcus marinus (strain NATL2A).